The chain runs to 571 residues: Dihydroxy-acid dehydratase (571 aa).

Cys56 provides a ligand contact to [2Fe-2S] cluster. Mg(2+) is bound at residue Asp88. A [2Fe-2S] cluster-binding site is contributed by Cys129. Mg(2+) is bound by residues Asp130 and Lys131. Residue Lys131 is modified to N6-carboxylysine. Residue Cys201 participates in [2Fe-2S] cluster binding. Mg(2+) is bound at residue Glu452. Residue Ser478 is the Proton acceptor of the active site.

This sequence belongs to the IlvD/Edd family. As to quaternary structure, homodimer. [2Fe-2S] cluster is required as a cofactor. The cofactor is Mg(2+).

The enzyme catalyses (2R)-2,3-dihydroxy-3-methylbutanoate = 3-methyl-2-oxobutanoate + H2O. It catalyses the reaction (2R,3R)-2,3-dihydroxy-3-methylpentanoate = (S)-3-methyl-2-oxopentanoate + H2O. The protein operates within amino-acid biosynthesis; L-isoleucine biosynthesis; L-isoleucine from 2-oxobutanoate: step 3/4. It functions in the pathway amino-acid biosynthesis; L-valine biosynthesis; L-valine from pyruvate: step 3/4. Functionally, functions in the biosynthesis of branched-chain amino acids. Catalyzes the dehydration of (2R,3R)-2,3-dihydroxy-3-methylpentanoate (2,3-dihydroxy-3-methylvalerate) into 2-oxo-3-methylpentanoate (2-oxo-3-methylvalerate) and of (2R)-2,3-dihydroxy-3-methylbutanoate (2,3-dihydroxyisovalerate) into 2-oxo-3-methylbutanoate (2-oxoisovalerate), the penultimate precursor to L-isoleucine and L-valine, respectively. This is Dihydroxy-acid dehydratase from Streptococcus mutans serotype c (strain ATCC 700610 / UA159).